Here is a 275-residue protein sequence, read N- to C-terminus: 4-deoxy-L-threo-5-hexosulose-uronate ketol-isomerase (275 aa).

Zn(2+)-binding residues include His193, His195, Glu200, and His242.

This sequence belongs to the KduI family. The cofactor is Zn(2+).

The enzyme catalyses 5-dehydro-4-deoxy-D-glucuronate = 3-deoxy-D-glycero-2,5-hexodiulosonate. The protein operates within glycan metabolism; pectin degradation; 2-dehydro-3-deoxy-D-gluconate from pectin: step 4/5. Its function is as follows. Catalyzes the isomerization of 5-dehydro-4-deoxy-D-glucuronate to 3-deoxy-D-glycero-2,5-hexodiulosonate. In Bacillus licheniformis (strain ATCC 14580 / DSM 13 / JCM 2505 / CCUG 7422 / NBRC 12200 / NCIMB 9375 / NCTC 10341 / NRRL NRS-1264 / Gibson 46), this protein is 4-deoxy-L-threo-5-hexosulose-uronate ketol-isomerase.